Consider the following 233-residue polypeptide: CDP-diacylglycerol--glycerol-3-phosphate 3-phosphatidyltransferase 2 (233 aa).

Positions 1-23 are disordered; sequence MGEEDTATVDQNSFGGGKDSLLR. Helical transmembrane passes span 40–60, 71–91, 100–120, 125–145, and 201–221; these read VITLPTVLTLGRVAAVPILVA, TATTSIFIAAAITDWLDGYIA, FGAFLDPVADKLMVAATLILL, MVAVVLGPVPWLVTVPSIAII, and LPSGIGLLYVSAGLSIWSLVV.

This sequence belongs to the CDP-alcohol phosphatidyltransferase class-I family. Mn(2+) serves as cofactor.

It localises to the microsome membrane. It is found in the endoplasmic reticulum membrane. It catalyses the reaction a CDP-1,2-diacyl-sn-glycerol + sn-glycerol 3-phosphate = a 1,2-diacyl-sn-glycero-3-phospho-(1'-sn-glycero-3'-phosphate) + CMP + H(+). Its pathway is phospholipid metabolism; phosphatidylglycerol biosynthesis; phosphatidylglycerol from CDP-diacylglycerol: step 1/2. Its function is as follows. Catalyzes the committed step to the synthesis of the acidic phospholipids, including phosphatidylglycerol (PG). Together with PGPS1, required for the proper embryo development by providing PG accurate levels. The sequence is that of CDP-diacylglycerol--glycerol-3-phosphate 3-phosphatidyltransferase 2 from Arabidopsis thaliana (Mouse-ear cress).